Consider the following 117-residue polypeptide: Aspartate 1-decarboxylase (117 aa).

The active-site Schiff-base intermediate with substrate; via pyruvic acid is the Ser25. Ser25 carries the post-translational modification Pyruvic acid (Ser). Thr57 contacts substrate. Tyr58 acts as the Proton donor in catalysis. Position 73–75 (73–75) interacts with substrate; that stretch reads GAA.

This sequence belongs to the PanD family. In terms of assembly, heterooctamer of four alpha and four beta subunits. The cofactor is pyruvate. Post-translationally, is synthesized initially as an inactive proenzyme, which is activated by self-cleavage at a specific serine bond to produce a beta-subunit with a hydroxyl group at its C-terminus and an alpha-subunit with a pyruvoyl group at its N-terminus.

It is found in the cytoplasm. It carries out the reaction L-aspartate + H(+) = beta-alanine + CO2. It participates in cofactor biosynthesis; (R)-pantothenate biosynthesis; beta-alanine from L-aspartate: step 1/1. Its function is as follows. Catalyzes the pyruvoyl-dependent decarboxylation of aspartate to produce beta-alanine. This chain is Aspartate 1-decarboxylase, found in Bacteroides fragilis (strain ATCC 25285 / DSM 2151 / CCUG 4856 / JCM 11019 / LMG 10263 / NCTC 9343 / Onslow / VPI 2553 / EN-2).